Consider the following 180-residue polypeptide: NADH-quinone oxidoreductase subunit I (180 aa).

4Fe-4S ferredoxin-type domains follow at residues 50–80 and 90–119; these read LTRDPDGEERCVACNLCAVACPVGCISLQKA and EFFRINFSRCIFCGMCEEACPTTAIQLTPD. 8 residues coordinate [4Fe-4S] cluster: C60, C63, C66, C70, C99, C102, C105, and C109.

The protein belongs to the complex I 23 kDa subunit family. In terms of assembly, NDH-1 is composed of 14 different subunits. Subunits NuoA, H, J, K, L, M, N constitute the membrane sector of the complex. The cofactor is [4Fe-4S] cluster.

The protein resides in the cell inner membrane. The catalysed reaction is a quinone + NADH + 5 H(+)(in) = a quinol + NAD(+) + 4 H(+)(out). In terms of biological role, NDH-1 shuttles electrons from NADH, via FMN and iron-sulfur (Fe-S) centers, to quinones in the respiratory chain. The immediate electron acceptor for the enzyme in this species is believed to be ubiquinone. Couples the redox reaction to proton translocation (for every two electrons transferred, four hydrogen ions are translocated across the cytoplasmic membrane), and thus conserves the redox energy in a proton gradient. This Acinetobacter baumannii (strain ACICU) protein is NADH-quinone oxidoreductase subunit I.